The primary structure comprises 260 residues: Exosome complex component Rrp4 (260 aa).

The region spanning 59–128 (NDVVIGIVIV…SSMKVELALR (70 aa)) is the S1 motif domain. Residues 136–194 (KTGQIIKVESVKVPRVIGHGGSMISMLKKETNCSIFVGQNGRIWIDGKDEDIELLSKAL) form the KH domain.

Belongs to the RRP4 family. As to quaternary structure, component of the archaeal exosome complex. Forms a trimer of Rrp4 and/or Csl4 subunits. The trimer associates with a hexameric ring-like arrangement composed of 3 Rrp41-Rrp42 heterodimers.

It is found in the cytoplasm. Functionally, non-catalytic component of the exosome, which is a complex involved in RNA degradation. Increases the RNA binding and the efficiency of RNA degradation. Confers strong poly(A) specificity to the exosome. This chain is Exosome complex component Rrp4, found in Methanosarcina acetivorans (strain ATCC 35395 / DSM 2834 / JCM 12185 / C2A).